The chain runs to 208 residues: Large ribosomal subunit protein uL3 (208 aa).

Positions 124–146 (HGQSRGPMAHGSRYHRRPGSMGP) are disordered.

This sequence belongs to the universal ribosomal protein uL3 family. In terms of assembly, part of the 50S ribosomal subunit. Forms a cluster with proteins L14 and L19.

In terms of biological role, one of the primary rRNA binding proteins, it binds directly near the 3'-end of the 23S rRNA, where it nucleates assembly of the 50S subunit. This Streptococcus thermophilus (strain ATCC BAA-491 / LMD-9) protein is Large ribosomal subunit protein uL3.